A 427-amino-acid chain; its full sequence is MLDVKLLRNNFDEVKQKLQNRGEDLGEFEKFGELDKRRRTLIVETEALKSQRNEVSQEIAKLKREKQDADAKIEEMRVVGDRIKTLDIELREIDEKLDMILMSIPNIPHESTPVGESEDDNVEIRKWGEVREFDFEPKAHWDLGTDLDILDFENAAKVTGSRFVFYKKLGARLERALINFMMDLHSNEHGYEEMLPPYMVNRASMTGTGQLPKFEEDAFLIEAEDYFLIPTAEVPVTNYHREDILKAEDLPRKYTAFSACFRSEAGSAGRDTRGLIRQHQFNKVELVQFVKPEDSYAALEKLTGNAEEVLRRLELPYRVLSMCTADLGFTAAKKYDLEVWIPSYNSYREISSCSNFESFQARRANIRFRREPGSKPEYVHTLNGSGLALGRTVAAILENYQDADGSVRIPKVLQGYMGGIEKIELPK.

An L-serine-binding site is contributed by 231–233; it reads TAE. Position 262–264 (262–264) interacts with ATP; it reads RSE. Glutamate 285 is an L-serine binding site. Residue 349–352 coordinates ATP; sequence EISS. Serine 385 serves as a coordination point for L-serine.

The protein belongs to the class-II aminoacyl-tRNA synthetase family. Type-1 seryl-tRNA synthetase subfamily. In terms of assembly, homodimer. The tRNA molecule binds across the dimer.

The protein localises to the cytoplasm. The enzyme catalyses tRNA(Ser) + L-serine + ATP = L-seryl-tRNA(Ser) + AMP + diphosphate + H(+). It carries out the reaction tRNA(Sec) + L-serine + ATP = L-seryl-tRNA(Sec) + AMP + diphosphate + H(+). It participates in aminoacyl-tRNA biosynthesis; selenocysteinyl-tRNA(Sec) biosynthesis; L-seryl-tRNA(Sec) from L-serine and tRNA(Sec): step 1/1. Its function is as follows. Catalyzes the attachment of serine to tRNA(Ser). Is also able to aminoacylate tRNA(Sec) with serine, to form the misacylated tRNA L-seryl-tRNA(Sec), which will be further converted into selenocysteinyl-tRNA(Sec). The protein is Serine--tRNA ligase of Listeria monocytogenes serotype 4b (strain CLIP80459).